Consider the following 277-residue polypeptide: MAAVSVYAPPVGGFSFDNCRRNAVLEADFAKRGYKLPKVRKTGTTIAGVVYKDGIVLGADTRATEGMVVADKNCSKIHFISPNIYCCGAGTAADTDMTTQLISSNLELHSLSTGRLPRVVTANRMLKQMLFRYQGYIGAALVLGGVDVTGPHLYSIYPHGSTDKLPYVTMGSGSLAAMAVFEDKFRPDMEEEEAKNLVSEAIAAGIFNDLGSGSNIDLCVISKNKLDFLRPYTVPNKKGTRLGRYRCEKGTTAVLTEKITPLEIEVLEETVQTMDTS.

Residues 1-43 constitute a propeptide, removed in mature form; that stretch reads MAAVSVYAPPVGGFSFDNCRRNAVLEADFAKRGYKLPKVRKTG. Thr-44 acts as the Nucleophile in catalysis.

The protein belongs to the peptidase T1B family. The 26S proteasome consists of a 20S proteasome core and two 19S regulatory subunits. The 20S proteasome core is a barrel-shaped complex made of 28 subunits that are arranged in four stacked rings. The two outer rings are each formed by seven alpha subunits, and the two inner rings are formed by seven beta subunits. The proteolytic activity is exerted by three beta-subunits PSMB5, PSMB6 and PSMB7. As to quaternary structure, (Microbial infection) Interacts with HIV-1 Tat protein. Expressed at a low level in colonic mucosa. Up-regulated in colorectal cancer tissues.

The protein localises to the cytoplasm. It localises to the nucleus. It carries out the reaction Cleavage of peptide bonds with very broad specificity.. Its function is as follows. Component of the 20S core proteasome complex involved in the proteolytic degradation of most intracellular proteins. This complex plays numerous essential roles within the cell by associating with different regulatory particles. Associated with two 19S regulatory particles, forms the 26S proteasome and thus participates in the ATP-dependent degradation of ubiquitinated proteins. The 26S proteasome plays a key role in the maintenance of protein homeostasis by removing misfolded or damaged proteins that could impair cellular functions, and by removing proteins whose functions are no longer required. Associated with the PA200 or PA28, the 20S proteasome mediates ubiquitin-independent protein degradation. This type of proteolysis is required in several pathways including spermatogenesis (20S-PA200 complex) or generation of a subset of MHC class I-presented antigenic peptides (20S-PA28 complex). Within the 20S core complex, PSMB7 displays a trypsin-like activity. This chain is Proteasome subunit beta type-7, found in Homo sapiens (Human).